A 267-amino-acid chain; its full sequence is 2-keto-3-deoxy-L-rhamnonate aldolase (267 aa).

H49 acts as the Proton acceptor in catalysis. Q151 serves as a coordination point for substrate. Residue E153 coordinates Mg(2+). 2 residues coordinate substrate: A178 and D179. D179 is a Mg(2+) binding site.

Belongs to the HpcH/HpaI aldolase family. KDR aldolase subfamily. As to quaternary structure, homohexamer. Mg(2+) is required as a cofactor.

It catalyses the reaction 2-dehydro-3-deoxy-L-rhamnonate = (S)-lactaldehyde + pyruvate. Its function is as follows. Catalyzes the reversible retro-aldol cleavage of 2-keto-3-deoxy-L-rhamnonate (KDR) to pyruvate and lactaldehyde. The polypeptide is 2-keto-3-deoxy-L-rhamnonate aldolase (Klebsiella pneumoniae subsp. pneumoniae (strain ATCC 700721 / MGH 78578)).